Reading from the N-terminus, the 111-residue chain is Large ribosomal subunit protein uL22 (111 aa).

The protein belongs to the universal ribosomal protein uL22 family. Part of the 50S ribosomal subunit.

Functionally, this protein binds specifically to 23S rRNA; its binding is stimulated by other ribosomal proteins, e.g. L4, L17, and L20. It is important during the early stages of 50S assembly. It makes multiple contacts with different domains of the 23S rRNA in the assembled 50S subunit and ribosome. The globular domain of the protein is located near the polypeptide exit tunnel on the outside of the subunit, while an extended beta-hairpin is found that lines the wall of the exit tunnel in the center of the 70S ribosome. The protein is Large ribosomal subunit protein uL22 of Fusobacterium nucleatum subsp. nucleatum (strain ATCC 25586 / DSM 15643 / BCRC 10681 / CIP 101130 / JCM 8532 / KCTC 2640 / LMG 13131 / VPI 4355).